Consider the following 878-residue polypeptide: Enoyl-CoA isomerase/hydratase claC (878 aa).

The interval 541-561 is disordered; the sequence is VGPASTEATSPVVEPSTMESD. Substrate-binding positions include 677-681 and Gly-724; that span reads AGADL.

It belongs to the enoyl-CoA hydratase/isomerase family.

It participates in secondary metabolite biosynthesis. Its function is as follows. Enoyl-CoA isomerase/hydratase; part of the cla gene cluster that produces clavatol and ortho-quinone methide. The clavatol biosynthesis cluster cla and the terrestric acid cluster tra are both involved in the production of peniphenones and penilactones. The non-reducing PKS claF is responsible for the formation of clavatol from successive condensations of 3 malonyl-CoA units, presumably with a simple acetyl-CoA starter unit, and 2 methylation steps. The esterase claE probably collaborates with claF by catalyzing the hydrolysis of ACP-bound acyl intermediates to free the ACP from stalled intermediates. The clavatol oxidase claD then converts clavatol to hydroxyclavatol. Spontaneous dehydration of hydroxyclavatol leads to the accumulation of the highly active ortho-quinone methide. On the other hand, the PKS-NRPS hybrid traA is involved in the formation of crustosic acid, with the help of traB and traD. The polyketide synthase module (PKS) of traA is responsible for the synthesis of the polyketide backbone via the condensation of an acetyl-CoA starter unit with 3 malonyl-CoA units. The downstream nonribosomal peptide synthetase (NRPS) module then amidates the carboxyl end of the polyketide with L-malic acid. Because traA lacks a designated enoylreductase (ER) domain, the required activity is provided the enoyl reductase traG. Crustosic acid undergoes decarboxylation and isomerization to the terrestric acid, catalyzed by the 2-oxoglutarate-dependent dioxygenase traH. Both acids are further converted to the 2 gamma-butyrolactones (R)-5-methyltetronic acid and (S)-5-carboxylmethyltetronic acid, with involvement of the cytochrome P450 monooxygenase claJ. Spontaneous addition of the methide to these gamma-butyrolactones leads to peniphenone D and penilactone D, which undergo again stereospecific attacking by methide to give penilactones A and B. The function of the enoyl-CoA isomerase/hydratase claC has not been investigated yet. The chain is Enoyl-CoA isomerase/hydratase claC from Penicillium crustosum (Blue mold fungus).